The following is a 165-amino-acid chain: Growth arrest and DNA damage-inducible protein GADD45 alpha (165 aa).

Thr-2 is modified (phosphothreonine).

This sequence belongs to the GADD45 family. In terms of assembly, interacts with AURKA, PCNA, GADD45GIP1 and MAPK14.

It localises to the nucleus. Might affect PCNA interaction with some CDK (cell division protein kinase) complexes; stimulates DNA excision repair in vitro and inhibits entry of cells into S phase. In T-cells, functions as a regulator of p38 MAPKs by inhibiting p88 phosphorylation and activity. The sequence is that of Growth arrest and DNA damage-inducible protein GADD45 alpha (Gadd45a) from Rattus norvegicus (Rat).